Reading from the N-terminus, the 1041-residue chain is FHIP family protein GF15501 (1041 aa).

Disordered stretches follow at residues 797-856 and 907-987; these read RKGN…NKRR and SNSS…SEPV. Position 803 is a phosphoserine (Ser-803). Positions 808 to 824 are enriched in low complexity; the sequence is NLQQQQALNPAQQQGQQ. Composition is skewed to polar residues over residues 825–843 and 907–933; these read RSAYATLSAATPVQATPTS and SNSSSESRGFAPGQQSAGTCETSLSTQ. Low complexity predominate over residues 942 to 973; sequence SGSSSNSSMGGSSQTLSAHSNATTTHSSSTLH.

It belongs to the FHIP family.

The chain is FHIP family protein GF15501 from Drosophila ananassae (Fruit fly).